The sequence spans 177 residues: Adenine phosphoribosyltransferase (177 aa).

Belongs to the purine/pyrimidine phosphoribosyltransferase family. In terms of assembly, homodimer.

Its subcellular location is the cytoplasm. The catalysed reaction is AMP + diphosphate = 5-phospho-alpha-D-ribose 1-diphosphate + adenine. It functions in the pathway purine metabolism; AMP biosynthesis via salvage pathway; AMP from adenine: step 1/1. Catalyzes a salvage reaction resulting in the formation of AMP, that is energically less costly than de novo synthesis. The polypeptide is Adenine phosphoribosyltransferase (Rhodococcus jostii (strain RHA1)).